A 257-amino-acid polypeptide reads, in one-letter code: Hydroxyacylglutathione hydrolase (257 aa).

The Zn(2+) site is built by histidine 54, histidine 56, aspartate 58, histidine 59, histidine 113, aspartate 137, and histidine 175.

It belongs to the metallo-beta-lactamase superfamily. Glyoxalase II family. As to quaternary structure, monomer. The cofactor is Zn(2+).

It catalyses the reaction an S-(2-hydroxyacyl)glutathione + H2O = a 2-hydroxy carboxylate + glutathione + H(+). Its pathway is secondary metabolite metabolism; methylglyoxal degradation; (R)-lactate from methylglyoxal: step 2/2. Its function is as follows. Thiolesterase that catalyzes the hydrolysis of S-D-lactoyl-glutathione to form glutathione and D-lactic acid. The polypeptide is Hydroxyacylglutathione hydrolase (Synechocystis sp. (strain ATCC 27184 / PCC 6803 / Kazusa)).